The primary structure comprises 472 residues: Radical SAM cyclopropyl synthase TigE (472 aa).

Residues 106-331 (GEQIKAIQLV…VIDLYEYGLD (226 aa)) enclose the Radical SAM core domain. [4Fe-4S] cluster contacts are provided by Cys-120, Cys-124, Cys-127, Tyr-339, Cys-360, Cys-378, Cys-414, Cys-417, Cys-423, Cys-427, and Cys-446.

This sequence belongs to the radical SAM superfamily. [4Fe-4S] cluster is required as a cofactor.

It catalyses the reaction L-isoleucyl-[protein] + AH2 + 2 S-adenosyl-L-methionine = methylcyclopropylglycine-[protein] + 2 5'-deoxyadenosine + 2 L-methionine + A + 2 H(+). Functionally, radical S-adenosylmethionine (SAM) enzyme that catalyzes the formation of methylcyclopropylglycine (mCPG) residues from isoleucine residues residing in the repeating TIGSVS motif of the precursor peptide TigB. Is thus involved in the maturation of a ribosomally synthesized and post-translationally modified peptide (RiPP). This Paramaledivibacter caminithermalis (strain DSM 15212 / CIP 107654 / DViRD3) (Clostridium caminithermale) protein is Radical SAM cyclopropyl synthase TigE.